Reading from the N-terminus, the 275-residue chain is Stage 0 sporulation protein YaaT (275 aa).

The region spanning Arg61–Ile146 is the PSP1 C-terminal domain.

The protein localises to the cytoplasm. Functionally, essential for the phosphorelay during initiation of sporulation. May control the level of phosphorylated spo0A through spo0E activity during sporulation. The sequence is that of Stage 0 sporulation protein YaaT (yaaT) from Bacillus subtilis (strain 168).